A 452-amino-acid chain; its full sequence is Phosphoglucosamine mutase (452 aa).

The active-site Phosphoserine intermediate is the S103. Residues S103, D243, D245, and D247 each contribute to the Mg(2+) site. Phosphoserine is present on S103.

Belongs to the phosphohexose mutase family. Mg(2+) is required as a cofactor. In terms of processing, activated by phosphorylation.

The enzyme catalyses alpha-D-glucosamine 1-phosphate = D-glucosamine 6-phosphate. Catalyzes the conversion of glucosamine-6-phosphate to glucosamine-1-phosphate. The polypeptide is Phosphoglucosamine mutase (Limosilactobacillus fermentum (strain NBRC 3956 / LMG 18251) (Lactobacillus fermentum)).